A 161-amino-acid chain; its full sequence is Protein-export protein SecB (161 aa).

The protein belongs to the SecB family. Homotetramer, a dimer of dimers. One homotetramer interacts with 1 SecA dimer.

It localises to the cytoplasm. In terms of biological role, one of the proteins required for the normal export of preproteins out of the cell cytoplasm. It is a molecular chaperone that binds to a subset of precursor proteins, maintaining them in a translocation-competent state. It also specifically binds to its receptor SecA. This is Protein-export protein SecB from Shewanella sp. (strain ANA-3).